The sequence spans 451 residues: DNA double-strand break repair protein Mre11 (451 aa).

The Mn(2+) site is built by D8, H10, D49, and N84. The active-site Proton donor is H85. H168, H198, and H200 together coordinate Mn(2+). The tract at residues 374–451 (REDNPPDLGD…GRPSLDRWIG (78 aa)) is disordered. Over residues 396–416 (GSEESSEEPEESDGEEVGLEV) the composition is skewed to acidic residues.

This sequence belongs to the MRE11/RAD32 family. Homodimer. Forms a heterotetramer composed of two Mre11 subunits and two Rad50 subunits. The cofactor is Mn(2+).

Nuclease activity is regulated by Rad50. In terms of biological role, part of the Rad50/Mre11 complex, which is involved in the early steps of DNA double-strand break (DSB) repair. The complex may facilitate opening of the processed DNA ends to aid in the recruitment of HerA and NurA. Mre11 binds to DSB ends and has both double-stranded 3'-5' exonuclease activity and single-stranded endonuclease activity. The chain is DNA double-strand break repair protein Mre11 from Methanopyrus kandleri (strain AV19 / DSM 6324 / JCM 9639 / NBRC 100938).